Reading from the N-terminus, the 251-residue chain is GTP cyclohydrolase 1 type 2 homolog (251 aa).

Residues His-64, His-65, Asp-102, His-219, and Glu-223 each contribute to the a divalent metal cation site.

The protein belongs to the GTP cyclohydrolase I type 2/NIF3 family. In terms of assembly, homohexamer.

The polypeptide is GTP cyclohydrolase 1 type 2 homolog (Chlamydia muridarum (strain MoPn / Nigg)).